The following is a 40-amino-acid chain: MNIILMGLPGAGKGTQASEIVKKFPIPHISTGDMFIKAIK.

10-15 (GAGKGT) contributes to the ATP binding site. Residues 30–40 (STGDMFIKAIK) form an NMP region. Threonine 31 serves as a coordination point for AMP.

Belongs to the adenylate kinase family. As to quaternary structure, monomer.

The protein resides in the cytoplasm. The catalysed reaction is AMP + ATP = 2 ADP. Its pathway is purine metabolism; AMP biosynthesis via salvage pathway; AMP from ADP: step 1/1. Catalyzes the reversible transfer of the terminal phosphate group between ATP and AMP. Plays an important role in cellular energy homeostasis and in adenine nucleotide metabolism. The protein is Adenylate kinase (adk) of Staphylococcus carnosus.